The sequence spans 1037 residues: Probable inorganic carbon transporter subunit DabA 1 (1037 aa).

Positions 460, 462, 719, and 734 each coordinate Zn(2+).

It belongs to the inorganic carbon transporter (TC 9.A.2) DabA family. In terms of assembly, forms a complex with DabB. Requires Zn(2+) as cofactor.

Its subcellular location is the cell inner membrane. Its function is as follows. Part of an energy-coupled inorganic carbon pump. The protein is Probable inorganic carbon transporter subunit DabA 1 of Nitrobacter winogradskyi (strain ATCC 25391 / DSM 10237 / CIP 104748 / NCIMB 11846 / Nb-255).